Reading from the N-terminus, the 144-residue chain is Large ribosomal subunit protein uL16 (144 aa).

Basic residues predominate over residues 1–16 (MLTPKRVKHRKQHRGK). The tract at residues 1 to 22 (MLTPKRVKHRKQHRGKMAGNAK) is disordered.

The protein belongs to the universal ribosomal protein uL16 family. As to quaternary structure, part of the 50S ribosomal subunit.

Its function is as follows. Binds 23S rRNA and is also seen to make contacts with the A and possibly P site tRNAs. In Brevibacillus brevis (strain 47 / JCM 6285 / NBRC 100599), this protein is Large ribosomal subunit protein uL16.